A 648-amino-acid polypeptide reads, in one-letter code: MVSQSIGWGDSPVDLCEGSNRAFQDTDQPACQLDVRLLRHKASWINPLCVQQPLQELCPQRPTVQSSENHVVLDTPSPLRLSILSYRDSLAEMPLSENTADVICSNSAHCSGGKEGDFFLATEEQEVHLQQESLLKNPKTVATSPSPKEGSARSESPHLTASTDDGDARSSSRSHAWNFFPLETFMLPADVEKENLHFYAADIIISVIENMKCNLPNQQQPERWDTEDASRLRGTGAEMTFYTHIKQEPGSSASSHTGCEGCAALQVSPVAETLSYCPVAGEACKHDLNKLVMLELGKYNDITKGCRCSYNSSKSATCESNLSPAGCLARELFRGFCKCWMLSEVNCQLPGSPTTASSGVGDEEYAEEDFDSSVDAAREVMLKSRVPGTEDWVLPRCQIILTVHPPIKRDIAVVAQNFFCAGCGTPIQPKFVKRLRYCEYLGKYFCASCHSSAESCIPARILTMWDFRKYQVSDFSKWLLDSVWHQPVFKLLGGHHSLYAKAKELDRVKDLQEQLFHIKKLLKTCRFADSVLKEFEQVPSHLTDECHIFSMDDFLRTKKGLLAPLLKDILRASLAHVDSCELCQGKGFICEFCQSTTVIFPFQTTTCRRCAACRACFHKQCFQSSRCPRCARIIARRQHLESLPTAAT.

Polar residues-rich tracts occupy residues 131–146 (QESL…TSPS) and 157–173 (PHLT…SSSR). The segment at 131–173 (QESLLKNPKTVATSPSPKEGSARSESPHLTASTDDGDARSSSR) is disordered. Ser144 is modified (phosphoserine). The tract at residues 183–222 (ETFMLPADVEKENLHFYAADIIISVIENMKCNLPNQQQPE) is interaction with UVRAG. N6-acetyllysine occurs at positions 469, 509, 519, 559, and 619.

In terms of assembly, interacts with UVRAG; the interaction is direct and promotes association with the PI3K/PI3KC3 and HOPS complexes. Interacts with STX17. Phosphorylated by MTOR at Ser-144 under nutrient-rich conditions. Phosphorylation prevents acetylation by KAT5/TIP60 and impairs RUBCNL/PACER function and autophagosome maturation. Under autophagy induction, Phosphorylation by MTOR is repressed, enabling acetylation by KAT5/TIP60. Post-translationally, acetylated by KAT5/TIP60 under autophagy induction, promoting autophagosome maturation and lipid metabolism. Acetylation is prevented by phosphorylation by MTOR. Lys-469 and Lys-559 constitute the key sites for tuning function in autophagy.

The protein localises to the cytoplasmic vesicle. The protein resides in the autophagosome membrane. Its function is as follows. Regulator of autophagy that promotes autophagosome maturation by facilitating the biogenesis of phosphatidylinositol 3-phosphate (PtdIns(3)P) in late steps of autophagy. Acts by antagonizing RUBCN, thereby stimulating phosphatidylinositol 3-kinase activity of the PI3K/PI3KC3 complex. Following anchorage to the autophagosomal SNARE STX17, promotes the recruitment of PI3K/PI3KC3 and HOPS complexes to the autophagosome to regulate the fusion specificity of autophagosomes with late endosomes/lysosomes. Binds phosphoinositides phosphatidylinositol 3-phosphate (PtdIns(3)P), 4-phosphate (PtdIns(4)P) and 5-phosphate (PtdIns(5)P). In addition to its role in autophagy, acts as a regulator of lipid and glycogen homeostasis. May act as a tumor suppressor. The polypeptide is Protein associated with UVRAG as autophagy enhancer (Mus musculus (Mouse)).